Consider the following 253-residue polypeptide: Probable transcriptional regulatory protein Tpet_0454 (253 aa).

The protein belongs to the TACO1 family.

Its subcellular location is the cytoplasm. The polypeptide is Probable transcriptional regulatory protein Tpet_0454 (Thermotoga petrophila (strain ATCC BAA-488 / DSM 13995 / JCM 10881 / RKU-1)).